An 808-amino-acid polypeptide reads, in one-letter code: Phospholipase D alpha 1 (808 aa).

The propeptide occupies 1–30 (MAQISLHGTLHVTIYEVDKLHSGGGPHFFR). In terms of domain architecture, C2 spans 1-125 (MAQISLHGTL…LDGEEIDRWV (125 aa)). A Ca(2+)-binding site is contributed by aspartate 186. The PLD phosphodiesterase 1 domain occupies 326-364 (TMFTHHQKIVVVDSAMPNGDSQRRRIVSFVGGLDLCDGR). Residues histidine 331, lysine 333, and aspartate 338 contribute to the active site. Histidine 331 lines the a 1,2-diacyl-sn-glycero-3-phosphate pocket. Ca(2+)-binding residues include histidine 370 and histidine 404. A 1,2-diacyl-sn-glycero-3-phosphate contacts are provided by glutamine 520 and histidine 659. A PLD phosphodiesterase 2 domain is found at 654-681 (FMIYVHTKMMIVDDEYIIIGSANINQRS). Active-site residues include histidine 659, lysine 661, and aspartate 666. Glutamate 720 contacts Ca(2+).

This sequence belongs to the phospholipase D family. C2-PLD subfamily. The cofactor is Ca(2+). As to expression, expression is higher in radicle than in endosperm.

Its subcellular location is the cytoplasm. It is found in the membrane. It localises to the vacuole. The protein localises to the endoplasmic reticulum. The protein resides in the plastid. Its subcellular location is the cell membrane. The enzyme catalyses a 1,2-diacyl-sn-glycero-3-phosphocholine + H2O = a 1,2-diacyl-sn-glycero-3-phosphate + choline + H(+). In terms of biological role, hydrolyzes glycerol-phospholipids at the terminal phosphodiesteric bond. Plays an important role in various cellular processes, including phytohormone action, vesicular trafficking, secretion, cytoskeletal arrangement, meiosis, tumor promotion, pathogenesis, membrane deterioration and senescence. This chain is Phospholipase D alpha 1 (PLD1), found in Ricinus communis (Castor bean).